The chain runs to 106 residues: Large ribosomal subunit protein uL24 (106 aa).

Belongs to the universal ribosomal protein uL24 family. In terms of assembly, part of the 50S ribosomal subunit.

One of two assembly initiator proteins, it binds directly to the 5'-end of the 23S rRNA, where it nucleates assembly of the 50S subunit. Functionally, one of the proteins that surrounds the polypeptide exit tunnel on the outside of the subunit. The polypeptide is Large ribosomal subunit protein uL24 (Acidithiobacillus ferrooxidans (strain ATCC 53993 / BNL-5-31) (Leptospirillum ferrooxidans (ATCC 53993))).